The chain runs to 545 residues: Dual specificity calcium/calmodulin-dependent 3',5'-cyclic nucleotide phosphodiesterase 1A (545 aa).

Calmodulin-binding stretches follow at residues 24 to 44 (TEKM…QLEK) and 114 to 137 (EKPK…MYRK). The PDEase domain occupies 142-522 (VGLTYPAAVI…ERWKELAAQG (381 aa)). The active-site Proton donor is histidine 219. Zn(2+) contacts are provided by histidine 223, histidine 259, aspartate 260, and aspartate 366. Position 260 (aspartate 260) interacts with Mg(2+). The segment at 526–545 (LHKNSEELGNTEEKHADTRP) is disordered.

The protein belongs to the cyclic nucleotide phosphodiesterase family. PDE1 subfamily. Homodimer. Interacts with YWHAZ. Zn(2+) is required as a cofactor. The cofactor is Mg(2+). Expressed in brain, kidney and testis.

It is found in the cell projection. It localises to the cilium. The protein localises to the flagellum. The catalysed reaction is a nucleoside 3',5'-cyclic phosphate + H2O = a nucleoside 5'-phosphate + H(+). It catalyses the reaction 3',5'-cyclic GMP + H2O = GMP + H(+). It carries out the reaction 3',5'-cyclic AMP + H2O = AMP + H(+). Type I PDE are activated by the binding of calmodulin in the presence of Ca(2+). Its activity is regulated as follows. Activated by the binding of calmodulin in the presence of Ca(2+). Functionally, calcium/calmodulin-dependent cyclic nucleotide phosphodiesterase with a dual specificity for the second messengers cGMP and cAMP, which are key regulators of many important physiological processes. Has a higher efficiency with cGMP compared to cAMP. This is Dual specificity calcium/calmodulin-dependent 3',5'-cyclic nucleotide phosphodiesterase 1A from Mus musculus (Mouse).